The sequence spans 138 residues: Acidic phospholipase A2 (138 aa).

Positions 1–16 are cleaved as a signal peptide; that stretch reads MRTLWIVAVLLLGVEG. 7 cysteine pairs are disulfide-bonded: C42–C131, C44–C60, C59–C111, C65–C138, C66–C104, C73–C97, and C91–C102. Residues Y43, G45, and G47 each coordinate Ca(2+). Residue H63 is part of the active site. Residue D64 participates in Ca(2+) binding. Residue D105 is part of the active site.

This sequence belongs to the phospholipase A2 family. Group II subfamily. D49 sub-subfamily. As to quaternary structure, homodimer. Ca(2+) is required as a cofactor. In terms of tissue distribution, expressed by the venom gland.

It is found in the secreted. It carries out the reaction a 1,2-diacyl-sn-glycero-3-phosphocholine + H2O = a 1-acyl-sn-glycero-3-phosphocholine + a fatty acid + H(+). Its function is as follows. PLA2 catalyzes the calcium-dependent hydrolysis of the 2-acyl groups in 3-sn-phosphoglycerides. The protein is Acidic phospholipase A2 of Crotalus atrox (Western diamondback rattlesnake).